We begin with the raw amino-acid sequence, 214 residues long: Killer cell lectin-like receptor subfamily B member 1 (214 aa).

Residues 1-42 (MDAPVLYAELHLANTQGLRCTSPPSPRQDACWGSGWHRVALK) lie on the Cytoplasmic side of the membrane. A helical; Signal-anchor for type II membrane protein transmembrane segment spans residues 43-63 (LGCVGLILLLMGLSVLVGFLV). Over 64 to 214 (QKPPIEKCSV…WICQKTLKRV (151 aa)) the chain is Extracellular. A C-type lectin domain is found at 98 to 208 (HWNKCLFISQ…CSSDNHWICQ (111 aa)). Intrachain disulfides connect Cys119–Cys207 and Cys186–Cys199.

The protein localises to the membrane. This chain is Killer cell lectin-like receptor subfamily B member 1 (Klrb1), found in Rattus norvegicus (Rat).